A 226-amino-acid polypeptide reads, in one-letter code: Ras-related protein RGP1 (226 aa).

Residue 25–32 (GDSAVGKS) participates in GTP binding. The short motif at 47-55 (SKATIGVEF) is the Effector region element. Residues 73–77 (DTAGQ) and 131–134 (NKSD) contribute to the GTP site. S-geranylgeranyl cysteine attachment occurs at residues Cys-223 and Cys-224.

The protein belongs to the small GTPase superfamily. Rab family.

The protein resides in the cell membrane. Its function is as follows. May play an important role in plant growth and development. In Oryza sativa subsp. japonica (Rice), this protein is Ras-related protein RGP1 (RGP1).